The chain runs to 436 residues: 3-ketoacyl-CoA thiolase (436 aa).

The active-site Acyl-thioester intermediate is cysteine 99. Active-site proton acceptor residues include histidine 392 and cysteine 422.

This sequence belongs to the thiolase-like superfamily. Thiolase family. In terms of assembly, heterotetramer of two alpha chains (FadJ) and two beta chains (FadI).

The protein resides in the cytoplasm. It catalyses the reaction an acyl-CoA + acetyl-CoA = a 3-oxoacyl-CoA + CoA. Its pathway is lipid metabolism; fatty acid beta-oxidation. In terms of biological role, catalyzes the final step of fatty acid oxidation in which acetyl-CoA is released and the CoA ester of a fatty acid two carbons shorter is formed. The polypeptide is 3-ketoacyl-CoA thiolase (Klebsiella pneumoniae (strain 342)).